We begin with the raw amino-acid sequence, 351 residues long: uncharacterized protein (351 aa).

The Mn(2+) site is built by Asp215, Asp226, His290, Glu319, and Glu333.

It belongs to the peptidase M24B family. It depends on Mn(2+) as a cofactor.

This is an uncharacterized protein from Staphylococcus aureus (strain USA300).